The primary structure comprises 3317 residues: Cadherin-23 (3317 aa).

The first 23 residues, 1-23, serve as a signal peptide directing secretion; sequence MRHPPVTWCAMLWLLMLVSGSWG. Residues 24–3062 are Extracellular-facing; that stretch reads QVNRLPFFTN…SVQLPDDMSA (3039 aa). 27 consecutive Cadherin domains span residues 34 to 132, 133 to 236, 237 to 348, 349 to 458, 459 to 559, 560 to 669, 670 to 782, 777 to 888, 889 to 993, 994 to 1100, 1101 to 1206, 1208 to 1311, 1312 to 1416, 1418 to 1525, 1527 to 1632, 1633 to 1742, 1743 to 1849, 1850 to 1957, 1958 to 2067, 2068 to 2172, 2173 to 2291, 2295 to 2400, 2401 to 2507, 2508 to 2609, 2612 to 2720, 2727 to 2844, and 2845 to 2973; these read HFFD…APTF, HNQP…DPIF, INLP…APEF, NSSE…RPIF, SQPL…VPTF, QKDA…PPTF, SKPA…APYY, KDAP…DPTF, QNLP…TPTF, FPAV…RPIF, LQSS…APVF, QQQY…AVQF, SNAS…SPRF, FTSD…PPVI, SPFG…APVF, QQPH…VPTF, PRDY…DPVL, LNLP…HPLF, TEGT…WPTF, SPPA…RPEF, LNPI…TPQF, GITY…NPIF, DQLS…RPQF, SKPQ…RPVF, PPNG…EPLF, SPQY…PPRF, and TKAE…EEEF. N-linked (GlcNAc...) asparagine glycans are attached at residues N155 and N206. 32 N-linked (GlcNAc...) asparagine glycosylation sites follow: N349, N391, N432, N464, N470, N600, N692, N763, N808, N825, N939, N999, N1016, N1169, N1280, N1313, N1471, N1532, N1649, N1665, N1816, N1855, N1887, N1900, N2012, N2048, N2127, N2166, N2193, N2261, N2355, and N2367. N-linked (GlcNAc...) asparagine glycans are attached at residues N2576, N2614, N2747, N2806, N2875, N2894, N2939, and N2979. The helical transmembrane segment at 3063 to 3083 threads the bilayer; it reads LQMAIIVLAILLFLAAMLFVL. At 3084 to 3317 the chain is on the cytoplasmic side; it reads MNWYYRTIHK…MESPLEITEL (234 aa).

Antiparallel heterodimer with PCDH15. Interacts with USH1C and USH1G.

The protein localises to the cell membrane. Cadherins are calcium-dependent cell adhesion proteins. They preferentially interact with themselves in a homophilic manner in connecting cells. CDH23 is required for establishing and/or maintaining the proper organization of the stereocilia bundle of hair cells in the cochlea and the vestibule during late embryonic/early postnatal development. It is part of the functional network formed by USH1C, USH1G, CDH23 and MYO7A that mediates mechanotransduction in cochlear hair cells. Required for normal hearing. This is Cadherin-23 (Cdh23) from Rattus norvegicus (Rat).